We begin with the raw amino-acid sequence, 397 residues long: Serpin B10 (397 aa).

The Nuclear localization signal motif lies at 74–77 (KKRK).

Belongs to the serpin family. Ov-serpin subfamily.

The protein resides in the nucleus. Its subcellular location is the cytoplasm. Its function is as follows. Protease inhibitor that may play a role in the regulation of protease activities during hematopoiesis and apoptosis induced by TNF. May regulate protease activities in the cytoplasm and in the nucleus. This is Serpin B10 (SERPINB10) from Otolemur garnettii (Small-eared galago).